Reading from the N-terminus, the 105-residue chain is UPF0235 protein RF_1332 (105 aa).

It belongs to the UPF0235 family.

The sequence is that of UPF0235 protein RF_1332 from Rickettsia felis (strain ATCC VR-1525 / URRWXCal2) (Rickettsia azadi).